The following is a 641-amino-acid chain: ATP-dependent zinc metalloprotease FtsH 2 (641 aa).

The Periplasmic portion of the chain corresponds to 1–100 (MLAYYVSVNQ…IDVKVIHNFW (100 aa)). The chain crosses the membrane as a helical span at residues 101 to 121 (GQAFLSVLPFLLFILALYFLF). At 122–641 (RQQIRMAGRG…LLPGLEGAPA (520 aa)) the chain is on the cytoplasmic side. 193-200 (GPPGTGKT) contacts ATP. Zn(2+) is bound at residue His415. Residue Glu416 is part of the active site. Positions 419 and 491 each coordinate Zn(2+). Residues 593-641 (KTGKMTNPPSKNSSPVSNGGEASSTKSPARQEETTKDGGLLPGLEGAPA) are disordered. Composition is skewed to low complexity over residues 599 to 610 (NPPSKNSSPVSN) and 630 to 641 (GGLLPGLEGAPA).

It in the central section; belongs to the AAA ATPase family. In the C-terminal section; belongs to the peptidase M41 family. Homohexamer. The cofactor is Zn(2+).

It localises to the cell inner membrane. Its function is as follows. Acts as a processive, ATP-dependent zinc metallopeptidase for both cytoplasmic and membrane proteins. Plays a role in the quality control of integral membrane proteins. In Methylacidiphilum infernorum (isolate V4) (Methylokorus infernorum (strain V4)), this protein is ATP-dependent zinc metalloprotease FtsH 2.